The sequence spans 297 residues: uncharacterized protein (297 aa).

The disordered stretch occupies residues 1-44 (MQKSKSIFIPKAFAPQQQAQAPPSKLDNKDPSVEGEGASKPKDD). Residues 10-23 (PKAFAPQQQAQAPP) are compositionally biased toward low complexity. Residues 26-44 (LDNKDPSVEGEGASKPKDD) show a composition bias toward basic and acidic residues.

This is an uncharacterized protein from Invertebrate iridescent virus 3 (IIV-3).